The chain runs to 427 residues: Adenylosuccinate synthetase (427 aa).

Residues 12–18 (GDEGKGK) and 40–42 (GHT) contribute to the GTP site. Catalysis depends on Asp-13, which acts as the Proton acceptor. The Mg(2+) site is built by Asp-13 and Gly-40. IMP is bound by residues 13–16 (DEGK), 38–41 (NAGH), Thr-127, Arg-141, Gln-222, Thr-237, and Arg-301. The Proton donor role is filled by His-41. 297-303 (VVTKRPR) contacts substrate. GTP contacts are provided by residues Arg-303, 329–331 (SLD), and 411–413 (AVG).

This sequence belongs to the adenylosuccinate synthetase family. As to quaternary structure, homodimer. Requires Mg(2+) as cofactor.

The protein resides in the cytoplasm. The enzyme catalyses IMP + L-aspartate + GTP = N(6)-(1,2-dicarboxyethyl)-AMP + GDP + phosphate + 2 H(+). Its pathway is purine metabolism; AMP biosynthesis via de novo pathway; AMP from IMP: step 1/2. Plays an important role in the de novo pathway of purine nucleotide biosynthesis. Catalyzes the first committed step in the biosynthesis of AMP from IMP. This chain is Adenylosuccinate synthetase, found in Leuconostoc citreum (strain KM20).